Reading from the N-terminus, the 365-residue chain is Phosphate acyltransferase (365 aa).

Belongs to the PlsX family. As to quaternary structure, homodimer. Probably interacts with PlsY.

The protein localises to the cytoplasm. The catalysed reaction is a fatty acyl-[ACP] + phosphate = an acyl phosphate + holo-[ACP]. It participates in lipid metabolism; phospholipid metabolism. Functionally, catalyzes the reversible formation of acyl-phosphate (acyl-PO(4)) from acyl-[acyl-carrier-protein] (acyl-ACP). This enzyme utilizes acyl-ACP as fatty acyl donor, but not acyl-CoA. This is Phosphate acyltransferase from Klebsiella pneumoniae (strain 342).